The chain runs to 610 residues: UvrABC system protein C (610 aa).

The region spanning 16-94 (SQPGVYRMYD…IKLYQPRYNV (79 aa)) is the GIY-YIG domain. The region spanning 204-239 (DQVLTQLIARMEKASQDLAFEEAARIRDQIQAVRRV) is the UVR domain.

It belongs to the UvrC family. As to quaternary structure, interacts with UvrB in an incision complex.

Its subcellular location is the cytoplasm. Functionally, the UvrABC repair system catalyzes the recognition and processing of DNA lesions. UvrC both incises the 5' and 3' sides of the lesion. The N-terminal half is responsible for the 3' incision and the C-terminal half is responsible for the 5' incision. The polypeptide is UvrABC system protein C (Salmonella paratyphi B (strain ATCC BAA-1250 / SPB7)).